Consider the following 603-residue polypeptide: Proline--tRNA ligase (603 aa).

The protein belongs to the class-II aminoacyl-tRNA synthetase family. ProS type 1 subfamily. In terms of assembly, homodimer.

It is found in the cytoplasm. The catalysed reaction is tRNA(Pro) + L-proline + ATP = L-prolyl-tRNA(Pro) + AMP + diphosphate. Functionally, catalyzes the attachment of proline to tRNA(Pro) in a two-step reaction: proline is first activated by ATP to form Pro-AMP and then transferred to the acceptor end of tRNA(Pro). As ProRS can inadvertently accommodate and process non-cognate amino acids such as alanine and cysteine, to avoid such errors it has two additional distinct editing activities against alanine. One activity is designated as 'pretransfer' editing and involves the tRNA(Pro)-independent hydrolysis of activated Ala-AMP. The other activity is designated 'posttransfer' editing and involves deacylation of mischarged Ala-tRNA(Pro). The misacylated Cys-tRNA(Pro) is not edited by ProRS. The chain is Proline--tRNA ligase from Paenarthrobacter aurescens (strain TC1).